Here is a 428-residue protein sequence, read N- to C-terminus: Hemagglutinin-esterase (428 aa).

A signal peptide spans 1-19; sequence MCIAMAPRTLLLLIXCQLV. Residues 9 to 129 form an esterase domain 1 region; it reads TLLLLIXCQL…DNKRWMGNKA (121 aa). Residues 20–404 are Virion surface-facing; sequence FGFNEPLNIV…PVCIYDPLPV (385 aa). S42 (nucleophile) is an active-site residue. The cysteines at positions 46 and 67 are disulfide-linked. N91, N149, N193, N243, and N313 each carry an N-linked (GlcNAc...) asparagine; by host glycan. Residues C115 and C164 are joined by a disulfide bond. The receptor binding stretch occupies residues 130 to 278; the sequence is RFYARVYEKM…GNYKAVSLEY (149 aa). 2 disulfides stabilise this stretch: C199–C288 and C207–C261. Positions 279–392 are esterase domain 2; sequence LLSLPSKAIC…HCPTAANIGY (114 aa). Residues C319 and C324 are joined by a disulfide bond. N-linked (GlcNAc...) asparagine; by host glycans are attached at residues N328 and N332. Catalysis depends on charge relay system residues D339 and H342. N-linked (GlcNAc...) asparagine; by host glycosylation is found at N357 and N371. C360 and C384 are oxidised to a cystine. Residues 405-425 form a helical membrane-spanning segment; that stretch reads ILLGVLLGIAVLIIVFLNVLF. At 426–428 the chain is on the intravirion side; the sequence is YDG.

Belongs to the influenza type C/coronaviruses hemagglutinin-esterase family. Homodimer; disulfide-linked. Forms a complex with the M protein in the pre-Golgi. Associates then with S-M complex to form a ternary complex S-M-HE. Post-translationally, N-glycosylated in the RER. N-glycosylated in the host RER.

It localises to the virion membrane. Its subcellular location is the host cell membrane. The enzyme catalyses N-acetyl-9-O-acetylneuraminate + H2O = N-acetylneuraminate + acetate + H(+). The catalysed reaction is N-acetyl-4-O-acetylneuraminate + H2O = N-acetylneuraminate + acetate + H(+). Functionally, structural protein that makes short spikes at the surface of the virus. Contains receptor binding and receptor-destroying activities. Mediates de-O-acetylation of N-acetyl-4-O-acetylneuraminic acid, which is probably the receptor determinant recognized by the virus on the surface of erythrocytes and susceptible cells. This receptor-destroying activity is important for virus release as it probably helps preventing self-aggregation and ensures the efficient spread of the progeny virus from cell to cell. May serve as a secondary viral attachment protein for initiating infection, the spike protein being the major one. May become a target for both the humoral and the cellular branches of the immune system. The protein is Hemagglutinin-esterase of Mus musculus (Mouse).